Consider the following 782-residue polypeptide: Endonuclease MutS2 (782 aa).

An ATP-binding site is contributed by 336–343 (GPNTGGKT). In terms of domain architecture, Smr spans 707-782 (LDLRGYRYDE…GFGVTVVEIK (76 aa)).

It belongs to the DNA mismatch repair MutS family. MutS2 subfamily. Homodimer. Binds to stalled ribosomes, contacting rRNA.

In terms of biological role, endonuclease that is involved in the suppression of homologous recombination and thus may have a key role in the control of bacterial genetic diversity. Acts as a ribosome collision sensor, splitting the ribosome into its 2 subunits. Detects stalled/collided 70S ribosomes which it binds and splits by an ATP-hydrolysis driven conformational change. Acts upstream of the ribosome quality control system (RQC), a ribosome-associated complex that mediates the extraction of incompletely synthesized nascent chains from stalled ribosomes and their subsequent degradation. Probably generates substrates for RQC. The protein is Endonuclease MutS2 of Staphylococcus saprophyticus subsp. saprophyticus (strain ATCC 15305 / DSM 20229 / NCIMB 8711 / NCTC 7292 / S-41).